Reading from the N-terminus, the 265-residue chain is Putative Tubby-like protein 4 (265 aa).

Residues 1-44 form the F-box domain; the sequence is MPPELLRDVLMRIERSEDTWPSRKNVVSCVGVCKNWRQIFKEIV. Residues 228–250 form the FBD domain; it reads SYELKLALYFAKNSAILKKFVLR.

Belongs to the TUB family.

In Arabidopsis thaliana (Mouse-ear cress), this protein is Putative Tubby-like protein 4.